Here is a 205-residue protein sequence, read N- to C-terminus: Small ribosomal subunit protein uS4B (205 aa).

The 64-residue stretch at Arg-94 to Leu-157 folds into the S4 RNA-binding domain.

Belongs to the universal ribosomal protein uS4 family. Part of the 30S ribosomal subunit. Contacts protein S5. The interaction surface between S4 and S5 is involved in control of translational fidelity.

In terms of biological role, one of the primary rRNA binding proteins, it binds directly to 16S rRNA where it nucleates assembly of the body of the 30S subunit. With S5 and S12 plays an important role in translational accuracy. This chain is Small ribosomal subunit protein uS4B, found in Nitrosomonas europaea (strain ATCC 19718 / CIP 103999 / KCTC 2705 / NBRC 14298).